The sequence spans 101 residues: Putative fatty acid-binding protein 5-like protein 3 (101 aa).

This sequence belongs to the calycin superfamily. Fatty-acid binding protein (FABP) family.

Functionally, high specificity for fatty acids. In Homo sapiens (Human), this protein is Putative fatty acid-binding protein 5-like protein 3 (FABP5P3).